A 137-amino-acid chain; its full sequence is Fluoride-specific ion channel FluC (137 aa).

The next 4 helical transmembrane spans lie at 11 to 31 (IAVSLGAIAGALSRYYLSLWF), 42 to 62 (GTLFINITGCLAMGFFYALAL), 75 to 95 (LIAVGFLGAYTTFSTYALDTF), and 107 to 127 (GFYWAGSTILGVISIQIGIIL). Gly-82 and Thr-85 together coordinate Na(+).

It belongs to the fluoride channel Fluc/FEX (TC 1.A.43) family.

It localises to the cell inner membrane. It carries out the reaction fluoride(in) = fluoride(out). With respect to regulation, na(+) is not transported, but it plays an essential structural role and its presence is essential for fluoride channel function. Functionally, fluoride-specific ion channel. Important for reducing fluoride concentration in the cell, thus reducing its toxicity. The protein is Fluoride-specific ion channel FluC of Trichormus variabilis (strain ATCC 29413 / PCC 7937) (Anabaena variabilis).